Reading from the N-terminus, the 266-residue chain is Glucosamine-6-phosphate deaminase 1 (266 aa).

The active-site Proton acceptor; for enolization step is D67. N136 (for ring-opening step) is an active-site residue. Catalysis depends on H138, which acts as the Proton acceptor; for ring-opening step. E143 acts as the For ring-opening step in catalysis.

Belongs to the glucosamine/galactosamine-6-phosphate isomerase family. In terms of assembly, homohexamer.

The protein resides in the cytoplasm. The catalysed reaction is alpha-D-glucosamine 6-phosphate + H2O = beta-D-fructose 6-phosphate + NH4(+). In terms of biological role, catalyzes the reversible conversion of alpha-D-glucosamine 6-phosphate (GlcN-6P) into beta-D-fructose 6-phosphate (Fru-6P) and ammonium ion, a regulatory reaction step in de novo uridine diphosphate-N-acetyl-alpha-D-glucosamine (UDP-GlcNAc) biosynthesis via hexosamine pathway. This chain is Glucosamine-6-phosphate deaminase 1 (GPI1), found in Giardia intestinalis (Giardia lamblia).